A 1265-amino-acid polypeptide reads, in one-letter code: Shugoshin 2 (1265 aa).

The stretch at 69–116 forms a coiled coil; that stretch reads KENSRRITTEKMLLQKEVEKLNFENTFLRLKLNNLNKKLIDIEALMNN. Disordered regions lie at residues 161 to 202, 230 to 287, 305 to 339, and 381 to 447; these read LTSN…STQD, DVPP…NLSA, LNCN…SARE, and GIKK…GAED. A compositionally biased stretch (polar residues) spans 190 to 202; the sequence is SSGSTTQPLSTQD. Over residues 232–242 the composition is skewed to basic and acidic residues; that stretch reads PPRESHSHSDQ. The span at 305-322 shows a compositional bias: polar residues; that stretch reads LNCNNEINGHTNETNTEM. 2 stretches are compositionally biased toward basic and acidic residues: residues 389 to 410 and 425 to 446; these read KTNE…EKKR and IGEK…RGAE. Positions 452-476 form a coiled coil; sequence FNNEQLAQMNEQLAQVNELKKMTLQ. Residues 499-526 are disordered; the sequence is EQEETYSLSQSSGKFHQESKFDKGQNSL. Residues 503-512 show a composition bias toward polar residues; the sequence is TYSLSQSSGK. Residues 603–626 are a coiled coil; sequence EQNESNINKLRKKVNRKTEIISGM. The segment covering 1073–1083 has biased composition (basic residues); sequence NKMTSKSKKRK. Positions 1073-1093 are disordered; sequence NKMTSKSKKRKTSIDPSPESH. Position 1144 is a phosphoserine (S1144). The segment at 1200–1265 is disordered; that stretch reads KVNRRTQKSG…EPSLRDKMRR (66 aa). Residues 1217–1230 show a composition bias toward polar residues; it reads DLSNTSFVSNNTAE. Positions 1231–1243 are enriched in basic and acidic residues; sequence SENKSEDLSSERT.

This sequence belongs to the shugoshin family. Part of an astrin (SPAG5) -kinastrin (SKAP) complex containing KNSTRN, SPAG5, PLK1, DYNLL1 and SGO2. Interacts with CDCA8. Directly interacts with PPP2CA.

Its subcellular location is the nucleus. It is found in the chromosome. The protein localises to the centromere. The protein resides in the kinetochore. Functionally, cooperates with PPP2CA to protect centromeric cohesin from separase-mediated cleavage in oocytes specifically during meiosis I. Has a crucial role in protecting REC8 at centromeres from cleavage by separase. During meiosis, protects centromeric cohesion complexes until metaphase II/anaphase II transition, preventing premature release of meiosis-specific REC8 cohesin complexes from anaphase I centromeres. Is thus essential for an accurate gametogenesis. May act by targeting PPP2CA to centromeres, thus leading to cohesin dephosphorylation. Essential for recruiting KIF2C to the inner centromere and for correcting defective kinetochore attachments. Involved in centromeric enrichment of AUKRB in prometaphase. The polypeptide is Shugoshin 2 (Homo sapiens (Human)).